Reading from the N-terminus, the 498-residue chain is Glycerol kinase (498 aa).

An ADP-binding site is contributed by Thr12. Thr12, Thr13, and Ser14 together coordinate ATP. Residue Thr12 participates in sn-glycerol 3-phosphate binding. Arg16 is a binding site for ADP. Residues Arg82, Glu83, Tyr134, and Asp243 each contribute to the sn-glycerol 3-phosphate site. Residues Arg82, Glu83, Tyr134, Asp243, and Gln244 each coordinate glycerol. ADP contacts are provided by Thr265 and Gly308. ATP-binding residues include Thr265, Gly308, Gln312, and Gly411. An ADP-binding site is contributed by Gly411.

It belongs to the FGGY kinase family.

It carries out the reaction glycerol + ATP = sn-glycerol 3-phosphate + ADP + H(+). It functions in the pathway polyol metabolism; glycerol degradation via glycerol kinase pathway; sn-glycerol 3-phosphate from glycerol: step 1/1. Its activity is regulated as follows. Inhibited by fructose 1,6-bisphosphate (FBP). Its function is as follows. Key enzyme in the regulation of glycerol uptake and metabolism. Catalyzes the phosphorylation of glycerol to yield sn-glycerol 3-phosphate. This chain is Glycerol kinase, found in Brucella canis (strain ATCC 23365 / NCTC 10854 / RM-666).